A 373-amino-acid polypeptide reads, in one-letter code: Glutamate 5-kinase (373 aa).

Lysine 12 provides a ligand contact to ATP. 3 residues coordinate substrate: serine 52, aspartate 139, and asparagine 154. Residue 216–222 (TGGMVTK) participates in ATP binding. The PUA domain occupies 281–359 (RGSICVDDGA…QELNAVLGGN (79 aa)).

The protein belongs to the glutamate 5-kinase family.

It is found in the cytoplasm. It catalyses the reaction L-glutamate + ATP = L-glutamyl 5-phosphate + ADP. Its pathway is amino-acid biosynthesis; L-proline biosynthesis; L-glutamate 5-semialdehyde from L-glutamate: step 1/2. Functionally, catalyzes the transfer of a phosphate group to glutamate to form L-glutamate 5-phosphate. The polypeptide is Glutamate 5-kinase (Dehalococcoides mccartyi (strain CBDB1)).